A 28-amino-acid polypeptide reads, in one-letter code: GLKDWWNKHKDKIIDVVKEMGKAGLQAA.

Ala-28 is subject to Alanine amide.

In terms of tissue distribution, expressed by the venom gland.

Its subcellular location is the secreted. Functionally, the synthetic peptide has antimicrobial activity against the Gram-positive bacteria B.amyloliquefacies S499 (MIC=0.05 mM), L.monocytogenes 2231 and S.aureus ATCC 29213, against the Gram-negative bacteria P.putida BTP1, P.aeruginosa PaO1 and E.coli ATCC 10536, and against the fungi S.cerevisiae, R.mucilaginosa and C.cucumerinum. It is not active against the fungi F.oxysporum and B.cinerea. The chain is M-poneritoxin-Da4b from Dinoponera australis (Giant neotropical hunting ant).